A 978-amino-acid chain; its full sequence is Monofunctional C1-tetrahydrofolate synthase, mitochondrial (978 aa).

Positions 1-10 (MGTRLPLVLR) are enriched in low complexity. A mitochondrion-targeting transit peptide spans 1–31 (MGTRLPLVLRQLRRPPQPPGPPRRLRVPCRA). Positions 1–71 (MGTRLPLVLR…SPGGRTPAAR (71 aa)) are disordered. Residues 31 to 348 (ASSGGGGGGG…REQQHRRWRL (318 aa)) are methylenetetrahydrofolate dehydrogenase and cyclohydrolase. Residues 33–45 (SGGGGGGGGGREG) are compositionally biased toward gly residues. An N6-acetyllysine; alternate modification is found at K189. K189 carries the post-translational modification N6-succinyllysine; alternate. The tract at residues 349–978 (HCLKLQPLSP…TETEQVKGLF (630 aa)) is formyltetrahydrofolate synthetase. S357 is subject to Phosphoserine. 423–430 (TPLGEGKS) contacts ATP. K596 carries the post-translational modification N6-succinyllysine.

It in the N-terminal section; belongs to the tetrahydrofolate dehydrogenase/cyclohydrolase family. In the C-terminal section; belongs to the formate--tetrahydrofolate ligase family. Homodimer. In terms of tissue distribution, detected in most tissues, highest expression found in placenta, thymus and brain. Low expression is found in liver and skeletal muscle. Up-regulated in colon adenocarcinoma.

It localises to the mitochondrion. It catalyses the reaction (6S)-5,6,7,8-tetrahydrofolate + formate + ATP = (6R)-10-formyltetrahydrofolate + ADP + phosphate. It participates in one-carbon metabolism; tetrahydrofolate interconversion. In terms of biological role, may provide the missing metabolic reaction required to link the mitochondria and the cytoplasm in the mammalian model of one-carbon folate metabolism complementing thus the enzymatic activities of MTHFD2. This Homo sapiens (Human) protein is Monofunctional C1-tetrahydrofolate synthase, mitochondrial.